Here is a 244-residue protein sequence, read N- to C-terminus: Carboxy-S-adenosyl-L-methionine synthase (244 aa).

S-adenosyl-L-methionine contacts are provided by residues Tyr-40, 65–67 (GCS), 90–91 (DN), 119–120 (DI), Asn-134, and Arg-201.

It belongs to the class I-like SAM-binding methyltransferase superfamily. Cx-SAM synthase family. As to quaternary structure, homodimer.

The catalysed reaction is prephenate + S-adenosyl-L-methionine = carboxy-S-adenosyl-L-methionine + 3-phenylpyruvate + H2O. Catalyzes the conversion of S-adenosyl-L-methionine (SAM) to carboxy-S-adenosyl-L-methionine (Cx-SAM). In Geobacter sp. (strain M21), this protein is Carboxy-S-adenosyl-L-methionine synthase.